The chain runs to 125 residues: Large ribosomal subunit protein uL22c (125 aa).

The protein belongs to the universal ribosomal protein uL22 family. As to quaternary structure, part of the 50S ribosomal subunit.

It localises to the plastid. Its subcellular location is the chloroplast. Functionally, this protein binds specifically to 23S rRNA. Its function is as follows. The globular domain of the protein is located near the polypeptide exit tunnel on the outside of the subunit, while an extended beta-hairpin is found that lines the wall of the exit tunnel in the center of the 70S ribosome. This is Large ribosomal subunit protein uL22c (rpl22) from Nymphaea alba (White water-lily).